Reading from the N-terminus, the 296-residue chain is Phosphatidylglycerol--prolipoprotein diacylglyceryl transferase (296 aa).

3 helical membrane passes run 17–37, 59–79, and 97–117; these read LAVR…IVVG, MMFY…VLFY, and GGMS…LFAW. Arginine 142 is an a 1,2-diacyl-sn-glycero-3-phospho-(1'-sn-glycerol) binding site. Helical transmembrane passes span 230–250 and 265–285; these read MGAI…TVEF and LSMG…MMIW.

The protein belongs to the Lgt family.

The protein localises to the cell inner membrane. The catalysed reaction is L-cysteinyl-[prolipoprotein] + a 1,2-diacyl-sn-glycero-3-phospho-(1'-sn-glycerol) = an S-1,2-diacyl-sn-glyceryl-L-cysteinyl-[prolipoprotein] + sn-glycerol 1-phosphate + H(+). It functions in the pathway protein modification; lipoprotein biosynthesis (diacylglyceryl transfer). Catalyzes the transfer of the diacylglyceryl group from phosphatidylglycerol to the sulfhydryl group of the N-terminal cysteine of a prolipoprotein, the first step in the formation of mature lipoproteins. This is Phosphatidylglycerol--prolipoprotein diacylglyceryl transferase from Burkholderia thailandensis (strain ATCC 700388 / DSM 13276 / CCUG 48851 / CIP 106301 / E264).